Here is a 2173-residue protein sequence, read N- to C-terminus: Mediator of RNA polymerase II transcription subunit 12 (2173 aa).

Disordered stretches follow at residues 1–34, 318–345, 630–718, 784–804, 1380–1404, 1443–1467, 1737–1780, and 2020–2068; these read MAAFGVLSYEHRPLKRPRLGPPDVYPQDPKQKED, GGHQAHGISAQQGNALPPTPTSQPAGGN, ASNS…KGMD, KSTAETGGEEGQKRKRSKPEA, MNSSNPSWNGSAVSGSSVSNSNSAS, ELEKGQHLGPSSRKERDRQKQKSMS, EEEP…VKQE, and QGIH…FRPQ. The segment covering 702-717 has biased composition (basic and acidic residues); the sequence is QAQEQESKSTAKDKGM. The segment covering 1389 to 1404 has biased composition (low complexity); sequence GSAVSGSSVSNSNSAS. 2 stretches are compositionally biased toward basic and acidic residues: residues 1443-1462 and 1747-1759; these read ELEKGQHLGPSSRKERDRQK and EPDKKLDTAKVEK. The span at 2034–2057 shows a compositional bias: low complexity; the sequence is QQQQQQQQQQQQQQQQQQVHQQQQ.

It belongs to the Mediator complex subunit 12 family. Component of the Mediator complex.

The protein resides in the nucleus. Its function is as follows. Component of the Mediator complex, a coactivator involved in regulated gene transcription of nearly all RNA polymerase II-dependent genes. Mediator functions as a bridge to convey information from gene-specific regulatory proteins to the basal RNA polymerase II transcription machinery. Mediator is recruited to promoters by direct interactions with regulatory proteins and serves as a scaffold for the assembly of a functional preinitiation complex with RNA polymerase II and the general transcription factors. Required for development of the body axis, brain, ear, kidney, forelimb and neural crest and for pigmentation. Acts as a coactivator for sox9a and/or sox9b promoting the expression of several neuronal determination genes. The polypeptide is Mediator of RNA polymerase II transcription subunit 12 (med12) (Danio rerio (Zebrafish)).